Consider the following 570-residue polypeptide: NADPH oxidase 2 (570 aa).

Topologically, residues 2–9 are cytoplasmic; that stretch reads GNWVVNEG. The helical transmembrane segment at 10 to 36 threads the bilayer; it reads ISIFVILVWLGMNVFLFVWYYRVYDIP. At 37–46 the chain is on the extracellular side; sequence DKFFYTRKLL. Residues 47 to 72 traverse the membrane as a helical segment; sequence GSALALARAPAACLNFNCMLILLPVC. The Ferric oxidoreductase domain maps to 54–286; the sequence is RAPAACLNFN…MFLYLCERLV (233 aa). Over 73 to 95 the chain is Cytoplasmic; the sequence is RNLLSFLRGSSACCSTRIRRQLD. A helical membrane pass occupies residues 96–130; sequence RNLTFHKMVAWMIALHTAIHTIAHLFNVEWCVNAR. Heme b is bound by residues H101 and H115. The Extracellular segment spans residues 131–163; it reads VNNSDPYSIALSDIGDKPNETYLNFVRQRIKNP. N-linked (GlcNAc...) asparagine glycosylation is found at N132 and N149. A Glycyl lysine isopeptide (Lys-Gly) (interchain with G-Cter in ubiquitin) cross-link involves residue K161. The chain crosses the membrane as a helical span at residues 164–194; the sequence is EGGLYVAVTRLAGITGVVITLCLILIITSST. Residues 195 to 203 are Cytoplasmic-facing; sequence KTIRRSYFE. R199 and S200 together coordinate FAD. A helical transmembrane segment spans residues 204–222; sequence VFWYTHHLFVIFFIGLAIH. Positions 206, 209, 222, 226, and 227 each coordinate heme b. At 223–267 the chain is on the extracellular side; it reads GAQRIVRGQTAESLLKHQPRNCYQNISQWGKIENCPIPEFSGNPP. Residue N247 is glycosylated (N-linked (GlcNAc...) asparagine). Heme b contacts are provided by M268, Y280, and R287. Residues 268 to 285 traverse the membrane as a helical segment; that stretch reads MTWKWIVGPMFLYLCERL. Over 286 to 570 the chain is Cytoplasmic; the sequence is VRFWRSQQKV…VHFIFNKENF (285 aa). An FAD-binding FR-type domain is found at 287-397; that stretch reads RFWRSQQKVV…DGPFGTASED (111 aa). Glycyl lysine isopeptide (Lys-Gly) (interchain with G-Cter in ubiquitin) cross-links involve residues K294, K299, K306, K328, and K334. 8 residues coordinate FAD: W337, H338, P339, T341, H354, R356, W361, and T362. K381 participates in a covalent cross-link: Glycyl lysine isopeptide (Lys-Gly) (interchain with G-Cter in ubiquitin). I411, R446, and T481 together coordinate NADPH. K506 participates in a covalent cross-link: Glycyl lysine isopeptide (Lys-Gly) (interchain with G-Cter in ubiquitin). Residue R513 participates in NADPH binding. K567 is covalently cross-linked (Glycyl lysine isopeptide (Lys-Gly) (interchain with G-Cter in ubiquitin)).

In terms of assembly, component of the phagocyte NADPH oxidase core complex/cytochrome b558 complex, composed of CYBB (heavy chain (beta)) and CYBA (light chain (alpha)). Component of the phagocyte NADPH oxidase complex composed of an obligatory core heterodimer formed by the membrane proteins CYBA and CYBB and the cytosolic regulatory subunits NCF1/p47-phox, NCF2/p67-phox, NCF4/p40-phox and the small GTPase RAC1 or RAC2. Interacts with NCF1 (phosphorylated form). Interacts with NCF2; the interaction is enhanced in the presence of GBP7. Interacts with RAC2. Interacts with RAC1. Interacts with calprotectin (S100A8/9). Interacts with NRROS; the interaction is direct and impairs formation of a stable NADPH oxidase complex. Interacts with CYBC1; CYBC1 may act as a chaperone stabilizing Cytochrome b-245 heterodimer. The CYBA-CYBB complex interacts with GBP7. FAD is required as a cofactor. Post-translationally, glycosylated. In terms of processing, phosphorylated on Ser and Thr residues by PKC during neutrophils activation. Phosphorylation enhances the NADPH oxidase activity and stimulates its interaction with RAC2, NCF2/p67-phox, and NCF1/p47-phox. Undergoes 'Lys-48'-linked polyubiquitination, likely by RNF145, triggering endoplasmic reticulum-associated degradation.

The protein resides in the cell membrane. It carries out the reaction NADPH + 2 O2 = 2 superoxide + NADP(+) + H(+). Its function is as follows. Catalytic subunit of the phagocyte NADPH oxidase complex that mediates the transfer of electrons from cytosolic NADPH to O2 to produce the superoxide anion (O2(-)). In the activated complex, electrons are first transferred from NADPH to flavin adenine dinucleotide (FAD) and subsequently transferred via two heme molecules to molecular oxygen, producing superoxide through an outer-sphere reaction. Activation of the NADPH oxidase complex is initiated by the assembly of cytosolic subunits of the NADPH oxidase complex with the core NADPH oxidase complex to form a complex at the plasma membrane or phagosomal membrane. This activation process is initiated by phosphorylation dependent binding of the cytosolic NCF1/p47-phox subunit to the C-terminus of CYBA/p22-phox. NADPH oxidase complex assembly is impaired through interaction with NRROS. This chain is NADPH oxidase 2, found in Bos taurus (Bovine).